The sequence spans 542 residues: Chromatin structure-remodeling complex subunit rsc4 (542 aa).

One can recognise a Bromo 1 domain in the interval 6-116 (HNAPFDKTKF…NTANSLESKD (111 aa)). Disordered stretches follow at residues 114–139 (SKDGTLNEEENEEMESSINEEHKPGT) and 246–327 (ISSF…PIPE). Positions 119–128 (LNEEENEEME) are enriched in acidic residues. Residues 139-249 (TNEIDVPKVI…QLSSSLISSF (111 aa)) form the Bromo 2 domain. Residues 252 to 266 (QPKEHSPATSKHEPE) show a composition bias toward basic and acidic residues. Phosphoserine occurs at positions 257, 271, 287, and 313. Residues 268–280 (TPASPTPSVSAST) are compositionally biased toward low complexity. Over residues 286–298 (TSVAPSFITSDQA) the composition is skewed to polar residues. The span at 304-322 (LKSEEAHVESFSKESEKDQ) shows a compositional bias: basic and acidic residues.

Component of the RSC complex composed of at least arp9, arp42, rsc1, rsc4, rsc7, rsc9, rsc58, sfh1, snf21, ssr1, ssr2, ssr3 and ssr4. The complex interacts with histone and histone variant components of centromeric chromatin.

The protein resides in the nucleus. Component of the chromatin structure remodeling complex (RSC), which is involved in transcription regulation and nucleosome positioning. Controls particularly membrane and organelle development genes. This Schizosaccharomyces pombe (strain 972 / ATCC 24843) (Fission yeast) protein is Chromatin structure-remodeling complex subunit rsc4 (rsc4).